We begin with the raw amino-acid sequence, 178 residues long: Large ribosomal subunit protein uL6 (178 aa).

It belongs to the universal ribosomal protein uL6 family. Part of the 50S ribosomal subunit.

Its function is as follows. This protein binds to the 23S rRNA, and is important in its secondary structure. It is located near the subunit interface in the base of the L7/L12 stalk, and near the tRNA binding site of the peptidyltransferase center. In Helicobacter pylori (strain HPAG1), this protein is Large ribosomal subunit protein uL6.